The sequence spans 169 residues: Probable calcium-binding protein CML20 (169 aa).

A disordered region spans residues 1–23 (MSSIYRTVSRKEKPRRHHGLTTQ). 4 EF-hand domains span residues 23-58 (QKKQ…LGFE), 59-94 (MTEE…KIGE), 96-131 (DTKE…LGEN), and 132-167 (FTDA…TAYG). Asp-36, Asp-38, Ser-40, Thr-42, Glu-47, Asp-72, Asp-74, Ser-76, Glu-83, Asp-109, Asp-111, Asn-113, Lys-115, Asp-120, Asp-145, Asp-147, Asp-149, Glu-151, and Glu-156 together coordinate Ca(2+).

In terms of assembly, interacts with TON1A and TON1B. Interacts with SAC3A and SAC3B. Interacts with UCH1 and UCH2.

Functionally, potential calcium sensor. The protein is Probable calcium-binding protein CML20 of Arabidopsis thaliana (Mouse-ear cress).